Consider the following 454-residue polypeptide: NEDD8-activating enzyme E1 catalytic subunit (454 aa).

Ala-2 bears the N-acetylalanine mark. 56 to 80 (GLGCELLKDLALSGFRNLEVIDMDR) lines the ATP pocket. Cys-215 (glycyl thioester intermediate) is an active-site residue.

The protein belongs to the ubiquitin-activating E1 family. UBA3 subfamily. Heterodimer of UBA3/ECR1 and AXR1. Interacts with NEDD8 and RCE1. As to expression, expressed in shoot, root and floral meristems, in vascular tissues of cotyledons and mature leaves, and in the stele of the root.

Its subcellular location is the nucleus. It catalyses the reaction ATP + [NEDD8 protein] + [E1 NEDD8-activating enzyme]-L-cysteine = AMP + diphosphate + [E1 NEDD8-activating enzyme]-S-[NEDD8 protein]-yl-L-cysteine.. It functions in the pathway protein modification; protein neddylation. Catalytic subunit of the dimeric ECR1-AXR1 E1 enzyme. E1 activates NEDD8/RUB1 by first adenylating its C-terminal glycine residue with ATP, thereafter linking this residue to the side chain of the catalytic cysteine, yielding a NEDD8-ECR1 thioester and free AMP. E1 finally transfers NEDD8 to the catalytic cysteine of RCE1. The sequence is that of NEDD8-activating enzyme E1 catalytic subunit (ECR1) from Arabidopsis thaliana (Mouse-ear cress).